The following is a 764-amino-acid chain: Thyrotropin receptor (764 aa).

The first 20 residues, 1–20 (MRPPPLLHLALLLALPRSLG), serve as a signal peptide directing secretion. Topologically, residues 21–413 (GKGCPSPPCE…EFNPCEDIMG (393 aa)) are extracellular. A disulfide bridge links cysteine 31 with cysteine 41. N-linked (GlcNAc...) asparagine glycans are attached at residues asparagine 77 and asparagine 99. LRR repeat units lie at residues 125 to 149 (LPLL…KVYS), 150 to 174 (TDVF…AFQG), 176 to 199 (CNET…AFNG), 201 to 223 (KLDA…AFGG), 225 to 248 (YSGP…GLEH), and 250 to 271 (KELI…SFLH). 2 N-linked (GlcNAc...) asparagine glycosylation sites follow: asparagine 177 and asparagine 198. Residue asparagine 302 is glycosylated (N-linked (GlcNAc...) asparagine). Residue tyrosine 385 is modified to Sulfotyrosine. Residues 414–441 (YKFLRIVVWFVSLLALLGNVFVLIVLLT) traverse the membrane as a helical segment. Topologically, residues 442–450 (SHYKLTVPR) are cytoplasmic. A helical transmembrane segment spans residues 451–473 (FLMCNLAFADFCMGMYLLLIASV). Topologically, residues 474 to 494 (DLYTHSEYYNHAIDWQTGPGC) are extracellular. An intrachain disulfide couples cysteine 494 to cysteine 569. The chain crosses the membrane as a helical span at residues 495-517 (NTAGFFTVFASELSVYTLTVITL). Residues 518–537 (ERWYAITFAMRLDRKIRLRH) lie on the Cytoplasmic side of the membrane. A helical transmembrane segment spans residues 538–560 (AYAIMVGGWVCCFLLALLPLVGI). Over 561-580 (SSYAKVSICLPMDTETPLAL) the chain is Extracellular. Residues 581 to 602 (AYIILVLLLNIVAFIIVCSCYV) traverse the membrane as a helical segment. Topologically, residues 603–625 (KIYITVRNPQYNPGDKDTKIAKR) are cytoplasmic. The chain crosses the membrane as a helical span at residues 626–649 (MAVLIFTDFMCMAPISFYALSALM). Over 650–660 (NKPLITVTNSK) the chain is Extracellular. A helical membrane pass occupies residues 661–682 (ILLVLFYPLNSCANPFLYAIFT). At 683 to 764 (KAFQRDVFIL…ISKEYNQTVL (82 aa)) the chain is on the cytoplasmic side. The PDZ-binding signature appears at 762–764 (TVL).

The protein belongs to the G-protein coupled receptor 1 family. FSH/LSH/TSH subfamily. In terms of assembly, interacts with heterodimer GPHA2:GPHB5; this interaction stimulates cAMP production. Interacts (via the PDZ-binding motif) with SCRIB; regulates TSHR trafficking and function. In terms of processing, glycosylated. Post-translationally, sulfated. Sulfation on Tyr-385 plays a role in thyrotropin receptor binding and activation.

Its subcellular location is the cell membrane. The protein localises to the basolateral cell membrane. Receptor for the thyroid-stimulating hormone (TSH) or thyrotropin. Also acts as a receptor for the heterodimeric glycoprotein hormone (GPHA2:GPHB5) or thyrostimulin. The activity of this receptor is mediated by G proteins which activate adenylate cyclase. Plays a central role in controlling thyroid cell metabolism. This Canis lupus familiaris (Dog) protein is Thyrotropin receptor (TSHR).